A 37-amino-acid chain; its full sequence is Large ribosomal subunit protein bL36 (37 aa).

Belongs to the bacterial ribosomal protein bL36 family.

This Mycobacterium tuberculosis (strain ATCC 25618 / H37Rv) protein is Large ribosomal subunit protein bL36 (rpmJ).